A 183-amino-acid chain; its full sequence is Ribosome-recycling factor (183 aa).

The protein belongs to the RRF family.

Its subcellular location is the cytoplasm. In terms of biological role, responsible for the release of ribosomes from messenger RNA at the termination of protein biosynthesis. May increase the efficiency of translation by recycling ribosomes from one round of translation to another. This Bifidobacterium longum subsp. infantis (strain ATCC 15697 / DSM 20088 / JCM 1222 / NCTC 11817 / S12) protein is Ribosome-recycling factor.